Here is a 108-residue protein sequence, read N- to C-terminus: ATP-dependent Clp protease adapter protein ClpS (108 aa).

A compositionally biased stretch (basic and acidic residues) spans 1–15; it reads MPRESSPDSHHEHGV. A disordered region spans residues 1-24; it reads MPRESSPDSHHEHGVAVEPARPEV.

This sequence belongs to the ClpS family. Binds to the N-terminal domain of the chaperone ClpA.

In terms of biological role, involved in the modulation of the specificity of the ClpAP-mediated ATP-dependent protein degradation. The protein is ATP-dependent Clp protease adapter protein ClpS of Stenotrophomonas maltophilia (strain R551-3).